The primary structure comprises 474 residues: Magnesium transporter MRS2-A, chloroplastic (474 aa).

The N-terminal 55 residues, 1-55, are a transit peptide targeting the chloroplast; sequence MASVSSSPSYSSQAAVLLLLHQPPHQHGHGGACLRYRGSQSQGRGNAVATSLGLS. The interval 79-129 is disordered; that stretch reads GKDGRAVTKDEEEEAAAAAVEEEGEVEVRREEDKPGDDGSREAAARGSGSG. Residues 88 to 103 are compositionally biased toward acidic residues; it reads DEEEEAAAAAVEEEGE. Residues 104–122 show a composition bias toward basic and acidic residues; sequence VEVRREEDKPGDDGSREAA. The next 2 helical transmembrane spans lie at 412–432 and 444–464; these read LLLQ…GIFG and WAFW…FFIM. The Required for magnesium transport activity signature appears at 432–434; that stretch reads GMN.

This sequence belongs to the CorA metal ion transporter (MIT) (TC 1.A.35.5) family.

Its subcellular location is the plastid. The protein resides in the chloroplast membrane. Functionally, magnesium transporter that may mediate the influx of magnesium in chloroplast. This Oryza sativa subsp. japonica (Rice) protein is Magnesium transporter MRS2-A, chloroplastic (MRS2-A).